The sequence spans 178 residues: MEQFHGTTIVSVRRGDKVALGGDGQVTLGNIVMKGGARKVRRIYNNQVLVGFAGGTADAFSLLDRFEAKLEKHQGNLTRAAVELAKDWRTDRMLRRLEAMLITADATTTLVITGNGDVLDPEGGICAIGSGGAYAQAAARALVENTDLSPREIVEKSLGIAGDMCIYTNHNRIIETIE.

Residue threonine 7 is part of the active site. Residues glycine 162, cysteine 165, and threonine 168 each contribute to the Na(+) site.

Belongs to the peptidase T1B family. HslV subfamily. A double ring-shaped homohexamer of HslV is capped on each side by a ring-shaped HslU homohexamer. The assembly of the HslU/HslV complex is dependent on binding of ATP.

It localises to the cytoplasm. It catalyses the reaction ATP-dependent cleavage of peptide bonds with broad specificity.. Its activity is regulated as follows. Allosterically activated by HslU binding. Functionally, protease subunit of a proteasome-like degradation complex believed to be a general protein degrading machinery. The protein is ATP-dependent protease subunit HslV of Burkholderia cenocepacia (strain ATCC BAA-245 / DSM 16553 / LMG 16656 / NCTC 13227 / J2315 / CF5610) (Burkholderia cepacia (strain J2315)).